The following is a 152-amino-acid chain: UPF0178 protein SAS0646 (152 aa).

The protein belongs to the UPF0178 family.

The sequence is that of UPF0178 protein SAS0646 from Staphylococcus aureus (strain MSSA476).